A 396-amino-acid polypeptide reads, in one-letter code: Elongation factor Tu (396 aa).

A tr-type G domain is found at 10 to 206; that stretch reads KPHCNIGTIG…TVDAYIPQPE (197 aa). Residues 19–26 form a G1 region; that stretch reads GHVDHGKT. Residue 19–26 coordinates GTP; that stretch reads GHVDHGKT. Residue threonine 26 coordinates Mg(2+). Residues 60-64 form a G2 region; sequence GITIS. Positions 81-84 are G3; the sequence is DCPG. GTP is bound by residues 81–85 and 136–139; these read DCPGH and NKVD. Positions 136-139 are G4; it reads NKVD. Residues 174–176 form a G5 region; the sequence is SAL.

The protein belongs to the TRAFAC class translation factor GTPase superfamily. Classic translation factor GTPase family. EF-Tu/EF-1A subfamily. In terms of assembly, monomer.

Its subcellular location is the cytoplasm. The enzyme catalyses GTP + H2O = GDP + phosphate + H(+). GTP hydrolase that promotes the GTP-dependent binding of aminoacyl-tRNA to the A-site of ribosomes during protein biosynthesis. This is Elongation factor Tu from Methylocella silvestris (strain DSM 15510 / CIP 108128 / LMG 27833 / NCIMB 13906 / BL2).